Here is a 546-residue protein sequence, read N- to C-terminus: CTP synthase (546 aa).

The amidoligase domain stretch occupies residues 1–269 (MNSNTKIIFV…DAKLVELLNL (269 aa)). S16 provides a ligand contact to CTP. S16 serves as a coordination point for UTP. Residues 17-22 (SLGKGV) and D74 each bind ATP. Positions 74 and 143 each coordinate Mg(2+). CTP is bound by residues 150–152 (DIE), 190–195 (KTKPTQ), and K226. Residues 190-195 (KTKPTQ) and K226 contribute to the UTP site. One can recognise a Glutamine amidotransferase type-1 domain in the interval 294–546 (TIAMVGKYVS…IQAAIENSNN (253 aa)). Residue G356 participates in L-glutamine binding. Catalysis depends on C383, which acts as the Nucleophile; for glutamine hydrolysis. L-glutamine contacts are provided by residues 384–387 (LGMQ), E407, and R474. Active-site residues include H519 and E521.

This sequence belongs to the CTP synthase family. As to quaternary structure, homotetramer.

The catalysed reaction is UTP + L-glutamine + ATP + H2O = CTP + L-glutamate + ADP + phosphate + 2 H(+). It carries out the reaction L-glutamine + H2O = L-glutamate + NH4(+). The enzyme catalyses UTP + NH4(+) + ATP = CTP + ADP + phosphate + 2 H(+). Its pathway is pyrimidine metabolism; CTP biosynthesis via de novo pathway; CTP from UDP: step 2/2. Allosterically activated by GTP, when glutamine is the substrate; GTP has no effect on the reaction when ammonia is the substrate. The allosteric effector GTP functions by stabilizing the protein conformation that binds the tetrahedral intermediate(s) formed during glutamine hydrolysis. Inhibited by the product CTP, via allosteric rather than competitive inhibition. In terms of biological role, catalyzes the ATP-dependent amination of UTP to CTP with either L-glutamine or ammonia as the source of nitrogen. Regulates intracellular CTP levels through interactions with the four ribonucleotide triphosphates. The sequence is that of CTP synthase from Francisella tularensis subsp. mediasiatica (strain FSC147).